We begin with the raw amino-acid sequence, 173 residues long: Endosomal/vacuolar adapter protein YPT35 (173 aa).

In terms of domain architecture, PX spans 40-173 (ERAFVTNCTI…LVIQFLRPRK (134 aa)).

The protein belongs to the YPT35 family.

It is found in the endosome membrane. The protein localises to the vacuole membrane. Its function is as follows. Recruits the lipid transfer protein VPS13 to endosomal and vacuolar membranes. This is Endosomal/vacuolar adapter protein YPT35 (YPT35) from Candida glabrata (strain ATCC 2001 / BCRC 20586 / JCM 3761 / NBRC 0622 / NRRL Y-65 / CBS 138) (Yeast).